The chain runs to 138 residues: Single-stranded DNA-binding protein 3 (138 aa).

The 104-residue stretch at 1–104 (MINNIVLVGR…VVAENFQLLE (104 aa)) folds into the SSB domain. Over residues 105-121 (SRNSQQQTNQSGNSSNS) the composition is skewed to low complexity. The tract at residues 105–138 (SRNSQQQTNQSGNSSNSYFGNANKMDISDDDLPF) is disordered. The short motif at 133–138 (DDDLPF) is the Important for interaction with partner proteins element.

Homotetramer.

Its function is as follows. Plays an important role in DNA replication, recombination and repair. Binds to ssDNA and to an array of partner proteins to recruit them to their sites of action during DNA metabolism. In Streptococcus agalactiae serotype V (strain ATCC BAA-611 / 2603 V/R), this protein is Single-stranded DNA-binding protein 3 (ssb3).